The following is a 179-amino-acid chain: Large ribosomal subunit protein uL5 (179 aa).

It belongs to the universal ribosomal protein uL5 family. Part of the 50S ribosomal subunit; part of the 5S rRNA/L5/L18/L25 subcomplex. Contacts the 5S rRNA and the P site tRNA. Forms a bridge to the 30S subunit in the 70S ribosome.

This is one of the proteins that bind and probably mediate the attachment of the 5S RNA into the large ribosomal subunit, where it forms part of the central protuberance. In the 70S ribosome it contacts protein S13 of the 30S subunit (bridge B1b), connecting the 2 subunits; this bridge is implicated in subunit movement. Contacts the P site tRNA; the 5S rRNA and some of its associated proteins might help stabilize positioning of ribosome-bound tRNAs. The protein is Large ribosomal subunit protein uL5 of Pectobacterium atrosepticum (strain SCRI 1043 / ATCC BAA-672) (Erwinia carotovora subsp. atroseptica).